Reading from the N-terminus, the 319-residue chain is Putative GPI-anchor transamidase (319 aa).

The N-terminal stretch at 1-16 (MRHVLLIFCAIIATEA) is a signal peptide. Residues His-156 and Cys-198 contribute to the active site. Asn-257 is a glycosylation site (N-linked (GlcNAc...) asparagine).

This sequence belongs to the peptidase C13 family.

Its pathway is glycolipid biosynthesis; glycosylphosphatidylinositol-anchor biosynthesis. Mediates GPI anchoring in the endoplasmic reticulum, by replacing a protein's C-terminal GPI attachment signal peptide with a pre-assembled GPI. During this transamidation reaction, the GPI transamidase forms a carbonyl intermediate with the substrate protein. The protein is Putative GPI-anchor transamidase of Caenorhabditis elegans.